We begin with the raw amino-acid sequence, 1017 residues long: Protein HIRA (1017 aa).

WD repeat units lie at residues 11–53 and 68–107; these read HNGK…QEDD and NHLACVNCVRWSNSGMYLASGGDDKLIMVWKRATYIGPST. S111 is subject to Phosphoserine. 5 WD repeats span residues 129–168, 172–211, 220–263, 266–322, and 326–367; these read NHSGDVMDVAWSPHDAWLASCSVDNTVVIWNAVKFPEILA, GHSGLVKGLTWDPVGKYIASQADDRSLKVWRTLDWQLETS, GGTT…TNMD, GHRK…PLVV, and LFDK…DPLS. The segment at 421-479 is interaction with ASF1A; the sequence is REMGSATSVAGVVNGESLEDIRKNLLKKQVETRTADGRRRITPLCIAQLDTGDFSTAFF. The segment at 421–729 is interaction with CCNA1; it reads REMGSATSVA…RLKCNREGKE (309 aa). The tract at residues 439–475 is required for repression of histone gene transcription; that stretch reads EDIRKNLLKKQVETRTADGRRRITPLCIAQLDTGDFS. Residues 494-509 are compositionally biased toward low complexity; sequence SSHSSPQLLPLDSSTP. The disordered stretch occupies residues 494 to 555; it reads SSHSSPQLLP…AALSPSVLTT (62 aa). Positions 536–555 are enriched in polar residues; the sequence is KDSMNATSTPAALSPSVLTT. Position 549 is a phosphoserine (S549). The residue at position 555 (T555) is a Phosphothreonine; by CDK2. S557 bears the Phosphoserine mark. 2 disordered regions span residues 570–589 and 604–625; these read TERSKATPGAPALTSMTPTA and PRDLLESSSDSDEKVPLAKASS. A Phosphothreonine modification is found at T576. S584 carries the phosphoserine modification. T586 bears the Phosphothreonine mark. The segment at 593–826 is interaction with histone H2B; it reads LKEQNLVKEL…LAGSDMTVSQ (234 aa). Interaction with PAX3 regions lie at residues 594–739 and 740–828; these read KEQN…SRIL and TAAG…SQIL. Residues 604-619 show a composition bias toward basic and acidic residues; the sequence is PRDLLESSSDSDEKVP. Phosphoserine occurs at positions 610, 611, 612, 614, 661, 675, and 687. The segment at 738–1017 is interaction with histone H4; it reads ILTAAGSCDV…QEQLDILRDK (280 aa).

It belongs to the WD repeat HIR1 family. Interacts with histone H3-3B, PAX3 and PAX7. Interacts with histone H3.Y. Interacts with CCNA1, HIRIP3, NFU1/HIRIP5 and histone H2B. Part of a complex which includes ASF1A, CABIN1, histone H3.3, histone H4 and UBN1. Post-translationally, sumoylated. In terms of processing, phosphorylated by CDK2/CCNA1 and CDK2/CCNE1 on Thr-555 in vitro. Also phosphorylated on Thr-555 and Ser-687 in vivo. In terms of tissue distribution, expressed at high levels in kidney, pancreas and skeletal muscle and at lower levels in brain, heart, liver, lung, and placenta.

Its subcellular location is the nucleus. It is found in the PML body. Its function is as follows. Cooperates with ASF1A to promote replication-independent chromatin assembly. Required for the periodic repression of histone gene transcription during the cell cycle. Required for the formation of senescence-associated heterochromatin foci (SAHF) and efficient senescence-associated cell cycle exit. The protein is Protein HIRA (HIRA) of Homo sapiens (Human).